The primary structure comprises 501 residues: ATP synthase subunit alpha (501 aa).

169-176 (GDRQTGKT) is an ATP binding site.

Belongs to the ATPase alpha/beta chains family. As to quaternary structure, F-type ATPases have 2 components, CF(1) - the catalytic core - and CF(0) - the membrane proton channel. CF(1) has five subunits: alpha(3), beta(3), gamma(1), delta(1), epsilon(1). CF(0) has three main subunits: a(1), b(2) and c(9-12). The alpha and beta chains form an alternating ring which encloses part of the gamma chain. CF(1) is attached to CF(0) by a central stalk formed by the gamma and epsilon chains, while a peripheral stalk is formed by the delta and b chains.

The protein resides in the cell membrane. It catalyses the reaction ATP + H2O + 4 H(+)(in) = ADP + phosphate + 5 H(+)(out). Its function is as follows. Produces ATP from ADP in the presence of a proton gradient across the membrane. The alpha chain is a regulatory subunit. The chain is ATP synthase subunit alpha from Streptococcus equi subsp. equi (strain 4047).